We begin with the raw amino-acid sequence, 239 residues long: Major centromere autoantigen B (239 aa).

The interval 28–185 is disordered; the sequence is AGFGGGPNAT…DDEVPVPSFG (158 aa). Residues T37 and T39 each carry the phosphothreonine modification. 2 stretches are compositionally biased toward acidic residues: residues 46–117 and 148–179; these read GEEE…EAED and GEED…DDEV. Residues 176–239 are homodimerization; sequence DDEVPVPSFG…AGARGLGHQS (64 aa).

Antiparallel homodimer. Interacts with CENPT. Identified in a centromere complex containing histones H2A, H2B and H4, and at least CENPA, CENPB, CENPC, CENPT, CENPN, HJURP, SUPT16H, SSRP1 and RSF1. In terms of processing, poly-ADP-ribosylated by PARP1. N-terminally methylated by METTL11A/NTM1. Alpha-N-methylation is stimulated in response extracellular stimuli, including increased cell density and heat shock, and seems to facilitate binding to CENP-B boxes. Chromatin-bound CENP-B is primarily trimethylated.

The protein resides in the nucleus. It is found in the chromosome. Its subcellular location is the centromere. Interacts with centromeric heterochromatin in chromosomes and binds to a specific 17 bp subset of alphoid satellite DNA, called the CENP-B box. May organize arrays of centromere satellite DNA into a higher-order structure which then directs centromere formation and kinetochore assembly in mammalian chromosomes. In Ovis aries (Sheep), this protein is Major centromere autoantigen B (CENPB).